The following is a 134-amino-acid chain: Holo-[acyl-carrier-protein] synthase (134 aa).

Positions 8 and 57 each coordinate Mg(2+).

The protein belongs to the P-Pant transferase superfamily. AcpS family. Requires Mg(2+) as cofactor.

It localises to the cytoplasm. The enzyme catalyses apo-[ACP] + CoA = holo-[ACP] + adenosine 3',5'-bisphosphate + H(+). In terms of biological role, transfers the 4'-phosphopantetheine moiety from coenzyme A to a Ser of acyl-carrier-protein. The polypeptide is Holo-[acyl-carrier-protein] synthase (Rhizobium rhizogenes (strain K84 / ATCC BAA-868) (Agrobacterium radiobacter)).